Reading from the N-terminus, the 598-residue chain is 4-coumarate--CoA ligase-like 6 (598 aa).

ATP contacts are provided by Ser-232, Ser-233, Gly-234, Thr-235, Thr-236, and Lys-240. Arg-318 contributes to the CoA binding site. The interval 320–389 (DLAAAARAVE…TVFPSVQIVQ (70 aa)) is SBD1. Gly-367, Gln-389, and Thr-394 together coordinate (E)-4-coumaroyl-AMP. Residues Gln-389, Thr-394, Asp-475, and Arg-490 each contribute to the ATP site. An SBD2 region spans residues 390-454 (SYGLTESTGP…IRGPVVMKGY (65 aa)). (E)-4-coumaroyl-AMP contacts are provided by Lys-492 and Lys-496. CoA-binding residues include Lys-498 and Gly-499. Lys-581 lines the ATP pocket.

Belongs to the ATP-dependent AMP-binding enzyme family. Mg(2+) serves as cofactor.

It carries out the reaction (E)-4-coumarate + ATP + CoA = (E)-4-coumaroyl-CoA + AMP + diphosphate. It catalyses the reaction (E)-4-coumarate + ATP + H(+) = (E)-4-coumaroyl-AMP + diphosphate. The enzyme catalyses (E)-4-coumaroyl-AMP + CoA = (E)-4-coumaroyl-CoA + AMP + H(+). Functionally, carboxylate--CoA ligase that may use 4-coumarate as substrate. Follows a two-step reaction mechanism, wherein the carboxylate substrate first undergoes adenylation by ATP, followed by a thioesterification in the presence of CoA to yield the final CoA thioester. The chain is 4-coumarate--CoA ligase-like 6 (4CLL6) from Oryza sativa subsp. japonica (Rice).